The primary structure comprises 154 residues: Aspartate carbamoyltransferase regulatory chain (154 aa).

The Zn(2+) site is built by Cys109, Cys114, Cys138, and Cys141.

Belongs to the PyrI family. Contains catalytic and regulatory chains. Zn(2+) serves as cofactor.

In terms of biological role, involved in allosteric regulation of aspartate carbamoyltransferase. This Yersinia pestis protein is Aspartate carbamoyltransferase regulatory chain.